We begin with the raw amino-acid sequence, 130 residues long: Histone H2A type 2 (130 aa).

The interval 1 to 22 (MSGRGKQGGKTRAKSKTRSSRA) is disordered. Ser2 carries the post-translational modification N-acetylserine. At Ser2 the chain carries Phosphoserine. Lys6 is modified (N6-(2-hydroxyisobutyryl)lysine). Lys6 bears the N6-acetyllysine mark. Basic residues predominate over residues 7-19 (QGGKTRAKSKTRS). An N6-(2-hydroxyisobutyryl)lysine; alternate modification is found at Lys10. Position 10 is an N6-lactoyllysine; alternate (Lys10). Lys10 is modified (N6-succinyllysine). Glycyl lysine isopeptide (Lys-Gly) (interchain with G-Cter in ubiquitin) cross-links involve residues Lys14 and Lys16. An N6-(2-hydroxyisobutyryl)lysine; alternate modification is found at Lys37. Lys76 carries the post-translational modification N6-(2-hydroxyisobutyryl)lysine. N6-(2-hydroxyisobutyryl)lysine; alternate is present on Lys96. At Lys96 the chain carries N6-succinyllysine. The residue at position 96 (Lys96) is an N6-glutaryllysine; alternate. Gln105 is modified (N5-methylglutamine). Lys119 carries the post-translational modification N6-(2-hydroxyisobutyryl)lysine; alternate. Lys119 is subject to N6-glutaryllysine; alternate. Lys120 participates in a covalent cross-link: Glycyl lysine isopeptide (Lys-Gly) (interchain with G-Cter in ubiquitin).

The protein belongs to the histone H2A family. As to quaternary structure, the nucleosome is a histone octamer containing two molecules each of H2A, H2B, H3 and H4 assembled in one H3-H4 heterotetramer and two H2A-H2B heterodimers. The octamer wraps approximately 147 bp of DNA. Monoubiquitination of Lys-120 (H2AK119Ub) gives a specific tag for epigenetic transcriptional repression. Following DNA double-strand breaks (DSBs), it is ubiquitinated through 'Lys-63' linkage of ubiquitin moieties, leading to the recruitment of repair proteins to sites of DNA damage. H2AK119Ub and ionizing radiation-induced 'Lys-63'-linked ubiquitination are distinct events. Post-translationally, phosphorylation on Ser-2 is enhanced during mitosis. Phosphorylation on Ser-2 directly represses transcription. In terms of processing, glutamine methylation at Gln-105 (H2AQ104me) by FBL is specifically dedicated to polymerase I. It is present at 35S ribosomal DNA locus and impairs binding of the FACT complex.

Its subcellular location is the nucleus. It is found in the chromosome. In terms of biological role, core component of nucleosome. Nucleosomes wrap and compact DNA into chromatin, limiting DNA accessibility to the cellular machineries which require DNA as a template. Histones thereby play a central role in transcription regulation, DNA repair, DNA replication and chromosomal stability. DNA accessibility is regulated via a complex set of post-translational modifications of histones, also called histone code, and nucleosome remodeling. This is Histone H2A type 2 from Xenopus laevis (African clawed frog).